Consider the following 872-residue polypeptide: Protein translocase subunit SecA (872 aa).

ATP contacts are provided by residues Q87, 105–109, and D510; that span reads GEGKT. Zn(2+) is bound by residues C847, C849, C858, and C859.

The protein belongs to the SecA family. In terms of assembly, monomer and homodimer. Part of the essential Sec protein translocation apparatus which comprises SecA, SecYEG and auxiliary proteins SecDF-YajC and YidC. The cofactor is Zn(2+).

It is found in the cell inner membrane. The protein resides in the cytoplasm. The catalysed reaction is ATP + H2O + cellular proteinSide 1 = ADP + phosphate + cellular proteinSide 2.. Functionally, part of the Sec protein translocase complex. Interacts with the SecYEG preprotein conducting channel. Has a central role in coupling the hydrolysis of ATP to the transfer of proteins into and across the cell membrane, serving as an ATP-driven molecular motor driving the stepwise translocation of polypeptide chains across the membrane. This Aliarcobacter butzleri (strain RM4018) (Arcobacter butzleri) protein is Protein translocase subunit SecA.